Here is a 224-residue protein sequence, read N- to C-terminus: Urease accessory protein UreF (224 aa).

It belongs to the UreF family. As to quaternary structure, ureD, UreF and UreG form a complex that acts as a GTP-hydrolysis-dependent molecular chaperone, activating the urease apoprotein by helping to assemble the nickel containing metallocenter of UreC. The UreE protein probably delivers the nickel.

The protein localises to the cytoplasm. Its function is as follows. Required for maturation of urease via the functional incorporation of the urease nickel metallocenter. This chain is Urease accessory protein UreF, found in Klebsiella pneumoniae subsp. pneumoniae (strain ATCC 700721 / MGH 78578).